The primary structure comprises 658 residues: MSQPLLRALFAPSSRSYVPAVLLSLALGIQAAHAENSGGNAFVPAGNQQEAHWTINLKDADIREFIDQISEITGETFVVDPRVKGQVSVVSKAQLSLSEVYQLFLSVMSTHGFTVVAQGDQARIVPNAEAKTEAGGGQSAPDRLETRVIQVQQSPVSELIPLIRPLVPQYGHLAAVPSANALIISDRSANIARIEDVIRQLDQKGSHDYSVINLRYGWVMDAAEVLNNAMSRGQAKGAAGAQVIADARTNRLIILGPPQARAKLVQLAQSLDTPTARSANTRVIRLRHNDAKTLAETLGQISEGMKNNGGQGGEQTGGGRPSNILIRADESTNALVLLADPDTVNALEDIVRQLDVPRAQVLVEAAIVEISGDIQDAVGVQWAINKGGMGGTKTNFANTGLSIGTLLQSLESNKAPESIPDGAIVGIGSSSFGALVTALSANTKSNLLSTPSLLTLDNQKAEILVGQNVPFQTGSYTTNSEGSSNPFTTVERKDIGVSLKVTPHINDGAALRLEIEQEISALLPNAQQRNNTDLITSKRSIKSTILAENGQVIVIGGLIQDDVSQAESKVPLLGDIPLLGRLFRSTKDTHTKRNLMVFLRPTVVRDSAGLAALSGKKYSDIRVIDGTRGPEGRPSILPTNANQLFDGQAVDLRELMTE.

Positions 1 to 34 (MSQPLLRALFAPSSRSYVPAVLLSLALGIQAAHA) are cleaved as a signal peptide. Positions 51–141 (AHWTINLKDA…TEAGGGQSAP (91 aa)) are N0. Residues 142-205 (DRLETRVIQV…DVIRQLDQKG (64 aa)) form an N1 region. An N2 region spans residues 206–279 (SHDYSVINLR…SLDTPTARSA (74 aa)). The tract at residues 280 to 365 (NTRVIRLRHN…VPRAQVLVEA (86 aa)) is N3. Positions 302-322 (SEGMKNNGGQGGEQTGGGRPS) are disordered. The segment covering 307-320 (NNGGQGGEQTGGGR) has biased composition (gly residues). The interval 368-606 (VEISGDIQDA…VFLRPTVVRD (239 aa)) is secretin. Positions 608-658 (AGLAALSGKKYSDIRVIDGTRGPEGRPSILPTNANQLFDGQAVDLRELMTE) are s domain.

Belongs to the bacterial secretin family. GSP D subfamily. Forms a cylindrical channel with 15 subunits. The closed pentadecameric channel is 170 Angstroms long and 140 Angstroms in diameter.

It is found in the cell outer membrane. Its function is as follows. Involved in a type II secretion system (T2SS, formerly general secretion pathway, GSP) for the export of proteins. This subunit forms the outer membrane channel. Among its substrates are PrpL, elastase LasB, chitin binding protein D (CbpD), aminopeptidase PaAP, and metalloprotease ImpA. In Pseudomonas aeruginosa (strain ATCC 15692 / DSM 22644 / CIP 104116 / JCM 14847 / LMG 12228 / 1C / PRS 101 / PAO1), this protein is Secretin XcpQ.